The sequence spans 99 residues: DNA-binding protein HmvA (99 aa).

The segment at 52–55 (KTIK) is interaction with DNA.

The protein belongs to the archaeal histone HMF family. As to quaternary structure, homodimer or heterodimer with another histone. Dimers then assemble into higher oligomers, with the DNA wrapped around the protein core.

The protein localises to the cytoplasm. Its subcellular location is the chromosome. Binds and compact DNA (95 to 150 base pairs) to form nucleosome-like structures that contain positive DNA supercoils. Increases the resistance of DNA to thermal denaturation (in vitro). The sequence is that of DNA-binding protein HmvA (hmvA) from Methanococcus voltae.